We begin with the raw amino-acid sequence, 156 residues long: ATP synthase subunit b (156 aa).

The helical transmembrane segment at 7 to 29 (LIGQSLTFIAFILFCMKYVWPQL) threads the bilayer.

The protein belongs to the ATPase B chain family. As to quaternary structure, F-type ATPases have 2 components, F(1) - the catalytic core - and F(0) - the membrane proton channel. F(1) has five subunits: alpha(3), beta(3), gamma(1), delta(1), epsilon(1). F(0) has three main subunits: a(1), b(2) and c(10-14). The alpha and beta chains form an alternating ring which encloses part of the gamma chain. F(1) is attached to F(0) by a central stalk formed by the gamma and epsilon chains, while a peripheral stalk is formed by the delta and b chains.

It is found in the cell inner membrane. Functionally, f(1)F(0) ATP synthase produces ATP from ADP in the presence of a proton or sodium gradient. F-type ATPases consist of two structural domains, F(1) containing the extramembraneous catalytic core and F(0) containing the membrane proton channel, linked together by a central stalk and a peripheral stalk. During catalysis, ATP synthesis in the catalytic domain of F(1) is coupled via a rotary mechanism of the central stalk subunits to proton translocation. Its function is as follows. Component of the F(0) channel, it forms part of the peripheral stalk, linking F(1) to F(0). The sequence is that of ATP synthase subunit b from Saccharophagus degradans (strain 2-40 / ATCC 43961 / DSM 17024).